Consider the following 212-residue polypeptide: MDIAALREEYTRHGLSRDDLNVDPFKQFETWFKQACESQLLEPNAMSLATASDQGEPSLRTVLLKYFDNQGFVFFTNYESNKAKQIEENPYVALLFLWLPLERQVKIRGKAAKISTAESFRYFTTRPRGSQLGAWCSEQSSVISSRQLLEMKFEEIRRKFAQGEIPLPSFWGGYRIVPHYFEFWQGRPNRLHDRFSYTLQEDNTWEIHRLSP.

Substrate contacts are provided by residues 7–10 and Lys-65; that span reads REEY. Residues 60–65, 75–76, Lys-82, and Gln-104 contribute to the FMN site; these read RTVLLK and FT. The substrate site is built by Tyr-122, Arg-126, and Ser-130. Residues 139 to 140 and Trp-184 each bind FMN; that span reads QS. Residue 190-192 coordinates substrate; that stretch reads RLH. An FMN-binding site is contributed by Arg-194.

This sequence belongs to the pyridoxamine 5'-phosphate oxidase family. In terms of assembly, homodimer. FMN is required as a cofactor.

It catalyses the reaction pyridoxamine 5'-phosphate + O2 + H2O = pyridoxal 5'-phosphate + H2O2 + NH4(+). It carries out the reaction pyridoxine 5'-phosphate + O2 = pyridoxal 5'-phosphate + H2O2. It participates in cofactor metabolism; pyridoxal 5'-phosphate salvage; pyridoxal 5'-phosphate from pyridoxamine 5'-phosphate: step 1/1. It functions in the pathway cofactor metabolism; pyridoxal 5'-phosphate salvage; pyridoxal 5'-phosphate from pyridoxine 5'-phosphate: step 1/1. Catalyzes the oxidation of either pyridoxine 5'-phosphate (PNP) or pyridoxamine 5'-phosphate (PMP) into pyridoxal 5'-phosphate (PLP). This Rippkaea orientalis (strain PCC 8801 / RF-1) (Cyanothece sp. (strain PCC 8801)) protein is Pyridoxine/pyridoxamine 5'-phosphate oxidase.